The following is a 718-amino-acid chain: MEGKAADPLLCDSLILWLQTFNTAAPCRNVQDLTNGVAMAQVLHQIDVAWFDASWLNRIKEDVGDNWRIKSSNLKKILQGIMDYYHEFLDQQISEELIPDLNKISENSDPTELGRLMQLILGCAVNCERKQEHIQNIMTLEESVQHVVMTAIQELMSKEAMGPSASDVSSEMEQQLKKALEDLQEAIAEKEELAQRCQELDLQVAALQDEKNSLVSENEILNDRLEQLDDSLDDPNTVVAKKYFHAQLQLEQLQEENFRLEAAKDDYRVHCEDLEKQLIELQHRNNELTSLAEESRALKDENDILRAAADKASKLESTVEVYRKKLQDLNDFRRQVKSLQETNMMYMHNTVSLEDELREANAARAQLETYKRQVQELHNKLSEESKRADKLAFEMKRLEEKHEALVKEKERLVIQCDALKETNEELRYSQMQQDHLSRTDASRIKSHDNLAAELLPVEYREMFIQLQHENKMLLLQQEGSENERIMELQKQLEQKQWTVNELGTEKRLNKERIGELQQQIEDLQKTLQEQGSKTEGSSNLKQKLAAHMEKLSEVHDELQKKEAALAELQPDVSQNPQKIGELEAALRKKDEDMKAMEERYKMYLEKARNVIKTLDPKLNPASAEIMLLRKQITERDKKIEALEAEYKLAKLRDYEENLIVTAWYNKSLTLQKLGMEARLLGSGGACRDGPGRSFLAQQRHVTNTRRNLPVKVPSATSD.

One can recognise a Calponin-homology (CH) domain in the interval Pro8–Ala124. Coiled coils occupy residues Ser164–Tyr428 and Leu473–Arg652.

The protein belongs to the hook family. In terms of assembly, interacts with microtubules.

Its subcellular location is the cytoplasm. The protein resides in the cytoskeleton. May function to promote vesicle trafficking and/or fusion. The chain is Protein Hook homolog 1 (HOOK1) from Gallus gallus (Chicken).